A 121-amino-acid polypeptide reads, in one-letter code: MPKRDIKAFLYDILEYMDDIINFTKNMEYEEFINNKAIKYAVVRCLEVIGEAVKKIPKDIREKYPHIPFKELAGMRDKLIHQYFGVDYLTVWETAKYEIPEIKKEFEKIIKDIEGKDENSL.

Residues arginine 76 and histidine 81 contribute to the active site. An RX(4)HXY motif motif is present at residues 76-83; the sequence is RDKLIHQY. The residue at position 83 (tyrosine 83) is an O-di-AMP-tyrosine.

It belongs to the HepT RNase toxin family. In terms of assembly, homodimer, probably forms a complex with antitoxin MJ1215 or MJ1217. Modified by antitoxin MJ1215 or MJ1217; probably at least 2 successive AMPylation events occur on Tyr-83.

Its function is as follows. Probable toxic component of a putative type VII toxin-antitoxin (TA) system, probably an RNase. Probably neutralized by antitoxin MJ1215 or MJ1217. Neutralization may be due to AMPylation by antitoxin. The chain is Putative RNase MJ1216 from Methanocaldococcus jannaschii (strain ATCC 43067 / DSM 2661 / JAL-1 / JCM 10045 / NBRC 100440) (Methanococcus jannaschii).